The primary structure comprises 466 residues: Cysteine--tRNA ligase (466 aa).

A Zn(2+)-binding site is contributed by C28. A 'HIGH' region motif is present at residues 30 to 40 (PTVYNFFHIGN). Zn(2+) contacts are provided by C208, H233, and E237. The short motif at 265–269 (KMSKS) is the 'KMSKS' region element. K268 contributes to the ATP binding site.

This sequence belongs to the class-I aminoacyl-tRNA synthetase family. Monomer. Requires Zn(2+) as cofactor.

It is found in the cytoplasm. It catalyses the reaction tRNA(Cys) + L-cysteine + ATP = L-cysteinyl-tRNA(Cys) + AMP + diphosphate. The chain is Cysteine--tRNA ligase from Clostridium perfringens (strain 13 / Type A).